An 81-amino-acid polypeptide reads, in one-letter code: MRSSWMFVICFAMLILYTNGRILRPETSWEDELEDDLANNKRSLACSCEDGSGRTGTHWIFDCPKGWADCGGFRCCVETSK.

A signal peptide spans 1–20; sequence MRSSWMFVICFAMLILYTNG. Cystine bridges form between cysteine 46-cysteine 75, cysteine 48-cysteine 70, and cysteine 63-cysteine 76.

Expressed in ectodermal gland cells. In adult female tissues, highly transcribed in mesenteries (gametes-producing tissue) and slightly transcribed in tentacles, pharynx and physa.

Its function is as follows. Has toxic effects on zebrafish larvae. It causes contractile paralysis and twitching of the tail within 30 minutes, followed by death within 40 minutes. Does not show any toxicity when injected into arthropods (cherry shrimps or grass shrimps). The protein is N.vectensis toxin 4 of Nematostella vectensis (Starlet sea anemone).